The primary structure comprises 701 residues: Ephexin-1 (701 aa).

Composition is skewed to basic and acidic residues over residues 1-11 and 26-48; these read METKNSEDQGK and GPAEMRPELPPETAKETQNEEPR. A disordered region spans residues 1–141; it reads METKNSEDQG…TPEECPALTD (141 aa). A regulatory region; modulates activity toward RHOA, RAC1 and CDC42 region spans residues 1 to 264; that stretch reads METKNSEDQG…LDILQPEETK (264 aa). Over residues 120–132 the composition is skewed to polar residues; that stretch reads ASESSSTPGNGTT. Phosphotyrosine is present on Tyr-172. The interval 187–226 is disordered; the sequence is RRQQDAEIQGNSDGSQAGEDNAEEEEEEEEEPASPPERRA. The segment covering 206 to 218 has biased composition (acidic residues); sequence DNAEEEEEEEEEP. The region spanning 264–448 is the DH domain; it reads KLQEAMFELV…EMVVKACNEG (185 aa). The 113-residue stretch at 480–592 folds into the PH domain; the sequence is WLLKQGELQQ…WMTSLAPNRR (113 aa). Residues 603–664 form the SH3 domain; it reads LDCPQVQCVH…PSSMTEEILN (62 aa). The span at 679–690 shows a compositional bias: basic and acidic residues; it reads HKMEDPQRSQNK. Positions 679-701 are disordered; that stretch reads HKMEDPQRSQNKDRRKLGSRNRQ. Over residues 691-701 the composition is skewed to basic residues; sequence DRRKLGSRNRQ.

In terms of assembly, interacts with CDK5R1 and EPHA4; activated by EPHA4 through the CDK5 kinase. In terms of processing, phosphorylation by CDK5 upon EPHA4 activation by EFNA1 may regulate dendritic spine morphogenesis. Src-dependent phosphorylation at Tyr-172 upon EPHA4 activation increases the guanine exchange factor activity toward RHOA. Expressed in telencephalic neurons (at protein level). Expressed in brain, spinal cord and testis.

Its subcellular location is the cytoplasm. It localises to the membrane. The protein localises to the cell projection. It is found in the growth cone. Acts as a guanine nucleotide exchange factor (GEF) which differentially activates the GTPases RHOA, RAC1 and CDC42. Plays a role in axon guidance regulating ephrin-induced growth cone collapse and dendritic spine morphogenesis. Upon activation by ephrin through EPHA4, the GEF activity switches toward RHOA resulting in its activation. Activated RHOA promotes cone retraction at the expense of RAC1- and CDC42-stimulated growth cone extension. The chain is Ephexin-1 (Ngef) from Rattus norvegicus (Rat).